The primary structure comprises 324 residues: Glyoxylate/hydroxypyruvate reductase B (324 aa).

Active-site residues include Arg237 and Glu266. His285 functions as the Proton donor in the catalytic mechanism.

This sequence belongs to the D-isomer specific 2-hydroxyacid dehydrogenase family. GhrB subfamily. In terms of assembly, homodimer.

It is found in the cytoplasm. It catalyses the reaction glycolate + NADP(+) = glyoxylate + NADPH + H(+). The enzyme catalyses (R)-glycerate + NAD(+) = 3-hydroxypyruvate + NADH + H(+). It carries out the reaction (R)-glycerate + NADP(+) = 3-hydroxypyruvate + NADPH + H(+). In terms of biological role, catalyzes the NADPH-dependent reduction of glyoxylate and hydroxypyruvate into glycolate and glycerate, respectively. The chain is Glyoxylate/hydroxypyruvate reductase B from Citrobacter koseri (strain ATCC BAA-895 / CDC 4225-83 / SGSC4696).